Consider the following 56-residue polypeptide: Large ribosomal subunit protein bL32 (56 aa).

Residues 1 to 39 (MAVQQNKKSRSKRGMRRSHDSLSTAQLSVDATSGELHRR) are disordered. The span at 7–16 (KKSRSKRGMR) shows a compositional bias: basic residues. Over residues 21–31 (SLSTAQLSVDA) the composition is skewed to polar residues.

Belongs to the bacterial ribosomal protein bL32 family.

This chain is Large ribosomal subunit protein bL32, found in Shewanella piezotolerans (strain WP3 / JCM 13877).